The chain runs to 230 residues: Protein-L-isoaspartate O-methyltransferase (230 aa).

The active site involves Ser68.

This sequence belongs to the methyltransferase superfamily. L-isoaspartyl/D-aspartyl protein methyltransferase family.

Its subcellular location is the cytoplasm. The enzyme catalyses [protein]-L-isoaspartate + S-adenosyl-L-methionine = [protein]-L-isoaspartate alpha-methyl ester + S-adenosyl-L-homocysteine. Its function is as follows. Catalyzes the methyl esterification of L-isoaspartyl residues in peptides and proteins that result from spontaneous decomposition of normal L-aspartyl and L-asparaginyl residues. It plays a role in the repair and/or degradation of damaged proteins. This chain is Protein-L-isoaspartate O-methyltransferase, found in Salinibacter ruber (strain DSM 13855 / M31).